The chain runs to 261 residues: Succinate dehydrogenase iron-sulfur subunit (261 aa).

Positions 28 to 119 (RKVKVYRYDP…DIKIYPLPHM (92 aa)) constitute a 2Fe-2S ferredoxin-type domain. Residues Cys-80, Cys-85, and Cys-100 each contribute to the [2Fe-2S] cluster site. The 4Fe-4S ferredoxin-type domain maps to 161-191 (DREKLDGLYECILCACCSTSCPSYWWNGDKY). Positions 171, 174, and 177 each coordinate [4Fe-4S] cluster. Cys-181 contacts [3Fe-4S] cluster. An a ubiquinone-binding site is contributed by Trp-186. Residues Cys-228 and Cys-234 each contribute to the [3Fe-4S] cluster site. Position 238 (Cys-238) interacts with [4Fe-4S] cluster.

This sequence belongs to the succinate dehydrogenase/fumarate reductase iron-sulfur protein family. In terms of assembly, part of an enzyme complex containing four subunits: a flavoprotein, an iron-sulfur, cytochrome b-556, and a hydrophobic anchor protein. It depends on [2Fe-2S] cluster as a cofactor. The cofactor is [3Fe-4S] cluster. Requires [4Fe-4S] cluster as cofactor.

The catalysed reaction is a quinone + succinate = fumarate + a quinol. It functions in the pathway carbohydrate metabolism; tricarboxylic acid cycle; fumarate from succinate (bacterial route): step 1/1. The protein is Succinate dehydrogenase iron-sulfur subunit (sdhB) of Rickettsia prowazekii (strain Madrid E).